A 402-amino-acid chain; its full sequence is Phosphoglycerate kinase (402 aa).

Substrate contacts are provided by residues 24–26 (DFN), arginine 40, 63–66 (HFGR), arginine 122, and arginine 155. ATP is bound by residues lysine 206, glycine 297, glutamate 328, and 357 to 360 (GGDS).

This sequence belongs to the phosphoglycerate kinase family. In terms of assembly, monomer.

It is found in the cytoplasm. The enzyme catalyses (2R)-3-phosphoglycerate + ATP = (2R)-3-phospho-glyceroyl phosphate + ADP. It functions in the pathway carbohydrate degradation; glycolysis; pyruvate from D-glyceraldehyde 3-phosphate: step 2/5. This chain is Phosphoglycerate kinase, found in Synechococcus sp. (strain WH7803).